The following is a 125-amino-acid chain: Phosphoribosyl-AMP cyclohydrolase (125 aa).

Residue Asp74 coordinates Mg(2+). Cys75 is a binding site for Zn(2+). Asp76 and Asp78 together coordinate Mg(2+). Zn(2+) contacts are provided by Cys92 and Cys99.

Belongs to the PRA-CH family. In terms of assembly, homodimer. Mg(2+) serves as cofactor. Requires Zn(2+) as cofactor.

It is found in the cytoplasm. The catalysed reaction is 1-(5-phospho-beta-D-ribosyl)-5'-AMP + H2O = 1-(5-phospho-beta-D-ribosyl)-5-[(5-phospho-beta-D-ribosylamino)methylideneamino]imidazole-4-carboxamide. It functions in the pathway amino-acid biosynthesis; L-histidine biosynthesis; L-histidine from 5-phospho-alpha-D-ribose 1-diphosphate: step 3/9. Its function is as follows. Catalyzes the hydrolysis of the adenine ring of phosphoribosyl-AMP. This chain is Phosphoribosyl-AMP cyclohydrolase, found in Citrifermentans bemidjiense (strain ATCC BAA-1014 / DSM 16622 / JCM 12645 / Bem) (Geobacter bemidjiensis).